A 43-amino-acid chain; its full sequence is Cytochrome b559 subunit beta (43 aa).

Residues 18-34 (WLAIHGLAIPTVFFLGG) traverse the membrane as a helical segment. Histidine 22 is a heme binding site.

It belongs to the PsbE/PsbF family. As to quaternary structure, heterodimer of an alpha subunit and a beta subunit. PSII is composed of 1 copy each of membrane proteins PsbA, PsbB, PsbC, PsbD, PsbE, PsbF, PsbH, PsbI, PsbJ, PsbK, PsbL, PsbM, PsbT, PsbX, PsbY, PsbZ, Psb30/Ycf12, at least 3 peripheral proteins of the oxygen-evolving complex and a large number of cofactors. It forms dimeric complexes. The cofactor is heme b.

It localises to the plastid. The protein localises to the chloroplast thylakoid membrane. Its function is as follows. This b-type cytochrome is tightly associated with the reaction center of photosystem II (PSII). PSII is a light-driven water:plastoquinone oxidoreductase that uses light energy to abstract electrons from H(2)O, generating O(2) and a proton gradient subsequently used for ATP formation. It consists of a core antenna complex that captures photons, and an electron transfer chain that converts photonic excitation into a charge separation. This is Cytochrome b559 subunit beta from Phaeodactylum tricornutum (strain CCAP 1055/1).